The following is a 336-amino-acid chain: Phosphate acyltransferase (336 aa).

This sequence belongs to the PlsX family. Homodimer. Probably interacts with PlsY.

Its subcellular location is the cytoplasm. The catalysed reaction is a fatty acyl-[ACP] + phosphate = an acyl phosphate + holo-[ACP]. It participates in lipid metabolism; phospholipid metabolism. Its function is as follows. Catalyzes the reversible formation of acyl-phosphate (acyl-PO(4)) from acyl-[acyl-carrier-protein] (acyl-ACP). This enzyme utilizes acyl-ACP as fatty acyl donor, but not acyl-CoA. The sequence is that of Phosphate acyltransferase from Pseudomonas fluorescens (strain Pf0-1).